Reading from the N-terminus, the 275-residue chain is Dermonecrotic toxin SpaSicTox-betaIIA3 (275 aa).

His-5 is an active-site residue. The Mg(2+) site is built by Glu-25 and Asp-27. Residue His-41 is the Nucleophile of the active site. Intrachain disulfides connect Cys-45–Cys-51 and Cys-47–Cys-190. Asp-85 contacts Mg(2+).

Belongs to the arthropod phospholipase D family. Class II subfamily. Mg(2+) is required as a cofactor. Expressed by the venom gland.

Its subcellular location is the secreted. It catalyses the reaction an N-(acyl)-sphingosylphosphocholine = an N-(acyl)-sphingosyl-1,3-cyclic phosphate + choline. It carries out the reaction an N-(acyl)-sphingosylphosphoethanolamine = an N-(acyl)-sphingosyl-1,3-cyclic phosphate + ethanolamine. The catalysed reaction is a 1-acyl-sn-glycero-3-phosphocholine = a 1-acyl-sn-glycero-2,3-cyclic phosphate + choline. The enzyme catalyses a 1-acyl-sn-glycero-3-phosphoethanolamine = a 1-acyl-sn-glycero-2,3-cyclic phosphate + ethanolamine. Functionally, dermonecrotic toxins cleave the phosphodiester linkage between the phosphate and headgroup of certain phospholipids (sphingolipid and lysolipid substrates), forming an alcohol (often choline) and a cyclic phosphate. This toxin acts on sphingomyelin (SM). It may also act on ceramide phosphoethanolamine (CPE), lysophosphatidylcholine (LPC) and lysophosphatidylethanolamine (LPE), but not on lysophosphatidylserine (LPS), and lysophosphatidylglycerol (LPG). It acts by transphosphatidylation, releasing exclusively cyclic phosphate products as second products. Induces dermonecrosis, hemolysis, increased vascular permeability, edema, inflammatory response, and platelet aggregation. In Sicarius patagonicus (Six-eyed sand spider), this protein is Dermonecrotic toxin SpaSicTox-betaIIA3.